Here is a 640-residue protein sequence, read N- to C-terminus: Threonine--tRNA ligase (640 aa).

Positions 1–61 constitute a TGS domain; that stretch reads MPTITLPDGS…ACDADVTIIT (61 aa). Residues 243-534 form a catalytic region; it reads DHRKIGKALD…LIEQYAGNMP (292 aa). Positions 334, 385, and 511 each coordinate Zn(2+).

This sequence belongs to the class-II aminoacyl-tRNA synthetase family. In terms of assembly, homodimer. It depends on Zn(2+) as a cofactor.

It is found in the cytoplasm. It carries out the reaction tRNA(Thr) + L-threonine + ATP = L-threonyl-tRNA(Thr) + AMP + diphosphate + H(+). Its function is as follows. Catalyzes the attachment of threonine to tRNA(Thr) in a two-step reaction: L-threonine is first activated by ATP to form Thr-AMP and then transferred to the acceptor end of tRNA(Thr). Also edits incorrectly charged L-seryl-tRNA(Thr). This is Threonine--tRNA ligase from Dichelobacter nodosus (strain VCS1703A).